The following is a 268-amino-acid chain: Tryptophan synthase alpha chain (268 aa).

Active-site proton acceptor residues include Glu49 and Asp60.

Belongs to the TrpA family. In terms of assembly, tetramer of two alpha and two beta chains.

It catalyses the reaction (1S,2R)-1-C-(indol-3-yl)glycerol 3-phosphate + L-serine = D-glyceraldehyde 3-phosphate + L-tryptophan + H2O. The protein operates within amino-acid biosynthesis; L-tryptophan biosynthesis; L-tryptophan from chorismate: step 5/5. The alpha subunit is responsible for the aldol cleavage of indoleglycerol phosphate to indole and glyceraldehyde 3-phosphate. This chain is Tryptophan synthase alpha chain, found in Aeromonas hydrophila subsp. hydrophila (strain ATCC 7966 / DSM 30187 / BCRC 13018 / CCUG 14551 / JCM 1027 / KCTC 2358 / NCIMB 9240 / NCTC 8049).